Here is a 199-residue protein sequence, read N- to C-terminus: Superoxide dismutase [Fe] (199 aa).

The Fe cation site is built by histidine 27, histidine 74, aspartate 158, and histidine 162.

This sequence belongs to the iron/manganese superoxide dismutase family. As to quaternary structure, homodimer. The cofactor is Fe cation.

The catalysed reaction is 2 superoxide + 2 H(+) = H2O2 + O2. Destroys superoxide anion radicals which are normally produced within the cells and which are toxic to biological systems. The protein is Superoxide dismutase [Fe] (SODB) of Babesia bovis.